We begin with the raw amino-acid sequence, 546 residues long: Chaperonin GroEL (546 aa).

ATP-binding positions include 30 to 33, Lys51, 87 to 91, Gly415, 479 to 481, and Asp495; these read TLGP, DGTTT, and NAA. Residues 525–546 form a disordered region; it reads PEPKKDMPPMPGGGMGGMGGMY. Residues 536 to 546 show a composition bias toward gly residues; that stretch reads GGGMGGMGGMY.

Belongs to the chaperonin (HSP60) family. As to quaternary structure, forms a cylinder of 14 subunits composed of two heptameric rings stacked back-to-back. Interacts with the co-chaperonin GroES.

It localises to the cytoplasm. The catalysed reaction is ATP + H2O + a folded polypeptide = ADP + phosphate + an unfolded polypeptide.. Functionally, together with its co-chaperonin GroES, plays an essential role in assisting protein folding. The GroEL-GroES system forms a nano-cage that allows encapsulation of the non-native substrate proteins and provides a physical environment optimized to promote and accelerate protein folding. This chain is Chaperonin GroEL, found in Solidesulfovibrio magneticus (strain ATCC 700980 / DSM 13731 / RS-1) (Desulfovibrio magneticus).